We begin with the raw amino-acid sequence, 738 residues long: 1,4-alpha-glucan branching enzyme GlgB (738 aa).

Aspartate 399 (nucleophile) is an active-site residue. Glutamate 452 serves as the catalytic Proton donor.

It belongs to the glycosyl hydrolase 13 family. GlgB subfamily. As to quaternary structure, monomer.

It carries out the reaction Transfers a segment of a (1-&gt;4)-alpha-D-glucan chain to a primary hydroxy group in a similar glucan chain.. The protein operates within glycan biosynthesis; glycogen biosynthesis. Catalyzes the formation of the alpha-1,6-glucosidic linkages in glycogen by scission of a 1,4-alpha-linked oligosaccharide from growing alpha-1,4-glucan chains and the subsequent attachment of the oligosaccharide to the alpha-1,6 position. This is 1,4-alpha-glucan branching enzyme GlgB from Chlamydia trachomatis serovar L2 (strain ATCC VR-902B / DSM 19102 / 434/Bu).